Consider the following 76-residue polypeptide: Exodeoxyribonuclease 7 small subunit (76 aa).

This sequence belongs to the XseB family. Heterooligomer composed of large and small subunits.

The protein localises to the cytoplasm. It carries out the reaction Exonucleolytic cleavage in either 5'- to 3'- or 3'- to 5'-direction to yield nucleoside 5'-phosphates.. Its function is as follows. Bidirectionally degrades single-stranded DNA into large acid-insoluble oligonucleotides, which are then degraded further into small acid-soluble oligonucleotides. This chain is Exodeoxyribonuclease 7 small subunit, found in Arthrobacter sp. (strain FB24).